Here is a 351-residue protein sequence, read N- to C-terminus: Anthranilate phosphoribosyltransferase (351 aa).

5-phospho-alpha-D-ribose 1-diphosphate-binding positions include G90, 93-94 (GD), T98, 100-103 (NIST), 118-126 (KHGNRSASG), and S130. G90 provides a ligand contact to anthranilate. S102 contributes to the Mg(2+) binding site. N121 serves as a coordination point for anthranilate. Position 176 (R176) interacts with anthranilate. D235 and E236 together coordinate Mg(2+).

The protein belongs to the anthranilate phosphoribosyltransferase family. As to quaternary structure, homodimer. Mg(2+) serves as cofactor.

It catalyses the reaction N-(5-phospho-beta-D-ribosyl)anthranilate + diphosphate = 5-phospho-alpha-D-ribose 1-diphosphate + anthranilate. The protein operates within amino-acid biosynthesis; L-tryptophan biosynthesis; L-tryptophan from chorismate: step 2/5. In terms of biological role, catalyzes the transfer of the phosphoribosyl group of 5-phosphorylribose-1-pyrophosphate (PRPP) to anthranilate to yield N-(5'-phosphoribosyl)-anthranilate (PRA). In Prochlorococcus marinus (strain MIT 9313), this protein is Anthranilate phosphoribosyltransferase.